The sequence spans 164 residues: Large ribosomal subunit protein eL24z (164 aa).

A compositionally biased stretch (basic and acidic residues) spans 117-133 (ERIKKTKDEKKAKKVEY). The interval 117–164 (ERIKKTKDEKKAKKVEYASKQQKSQVKGNIPKSAAPKAAKMGGGGGRR) is disordered.

This sequence belongs to the eukaryotic ribosomal protein eL24 family. Interacts with the cauliflower mosaic virus transactivator TAV to form a TAV/60S complex. Interacts with REIL1 AND REIL2.

Its function is as follows. Might have an extraribosomal function in reinitiation of translation. The polypeptide is Large ribosomal subunit protein eL24z (RPL24A) (Arabidopsis thaliana (Mouse-ear cress)).